We begin with the raw amino-acid sequence, 364 residues long: MKKAILMMTFGSPEEISFEGVAEFFTNIRRGVRPQDHEIQTLYDNYIRIGGTPLQRITREEVNLVKERLGEEYGIYFANKFSRPFIPDVIKQMETDGVEECICLILEPHYSFYSVMGYEKFLESQQIRFLVIKDWYQQQSLLDFWTDEIRKILRNEVGEESFKVIFSAHSVPIFALDYGDPYIDQIFDNSRLIAEQLGLMTDQYTNTWQSESDIGIPWIKPDVLEYLREQKQHPEHYIFVPISFISEHIEVLFDNDVECYDLCQELGVTYHRPPMPNTDSRLIDALVATVRANEDKEFKTFLPEEETFDELAPSATTKDIMKETDDLQMPEFVKKLIEKKGRENVKMPYLIKKMLEKAGKLPKE.

Fe-coproporphyrin III contacts are provided by R29 and Y118. Fe(2+) contacts are provided by H169 and E250.

This sequence belongs to the ferrochelatase family.

It is found in the cytoplasm. The catalysed reaction is Fe-coproporphyrin III + 2 H(+) = coproporphyrin III + Fe(2+). The protein operates within porphyrin-containing compound metabolism; protoheme biosynthesis. In terms of biological role, involved in coproporphyrin-dependent heme b biosynthesis. Catalyzes the insertion of ferrous iron into coproporphyrin III to form Fe-coproporphyrin III. In Streptococcus pneumoniae (strain Taiwan19F-14), this protein is Coproporphyrin III ferrochelatase.